A 141-amino-acid polypeptide reads, in one-letter code: Small ribosomal subunit protein uS8c (141 aa).

Belongs to the universal ribosomal protein uS8 family. As to quaternary structure, part of the 30S ribosomal subunit.

The protein localises to the plastid. Its subcellular location is the chloroplast. One of the primary rRNA binding proteins, it binds directly to 16S rRNA central domain where it helps coordinate assembly of the platform of the 30S subunit. The protein is Small ribosomal subunit protein uS8c (rps8) of Chlamydomonas reinhardtii (Chlamydomonas smithii).